A 108-amino-acid polypeptide reads, in one-letter code: Nucleoid-associated protein Lcho_1975 (108 aa).

The protein belongs to the YbaB/EbfC family. As to quaternary structure, homodimer.

It is found in the cytoplasm. The protein resides in the nucleoid. Binds to DNA and alters its conformation. May be involved in regulation of gene expression, nucleoid organization and DNA protection. The polypeptide is Nucleoid-associated protein Lcho_1975 (Leptothrix cholodnii (strain ATCC 51168 / LMG 8142 / SP-6) (Leptothrix discophora (strain SP-6))).